We begin with the raw amino-acid sequence, 218 residues long: Leucine-rich repeat protein 2 (218 aa).

Residues 1–27 (MVAQNSRRELLAASLILTLALIRLTEA) form the signal peptide. LRR repeat units lie at residues 69-93 (HHQV…LGKL), 94-117 (EHLQ…LGNL), 119-141 (SLIS…LGKL), 142-165 (KSLV…LTVI), and 167-190 (SLKV…PFEH).

Functionally, probably involved in plant defense response. The protein is Leucine-rich repeat protein 2 of Arabidopsis thaliana (Mouse-ear cress).